We begin with the raw amino-acid sequence, 214 residues long: Protein-L-isoaspartate O-methyltransferase (214 aa).

S63 is a catalytic residue.

The protein belongs to the methyltransferase superfamily. L-isoaspartyl/D-aspartyl protein methyltransferase family.

It is found in the cytoplasm. The catalysed reaction is [protein]-L-isoaspartate + S-adenosyl-L-methionine = [protein]-L-isoaspartate alpha-methyl ester + S-adenosyl-L-homocysteine. In terms of biological role, catalyzes the methyl esterification of L-isoaspartyl residues in peptides and proteins that result from spontaneous decomposition of normal L-aspartyl and L-asparaginyl residues. It plays a role in the repair and/or degradation of damaged proteins. The chain is Protein-L-isoaspartate O-methyltransferase from Desulfotalea psychrophila (strain LSv54 / DSM 12343).